A 311-amino-acid polypeptide reads, in one-letter code: Phospholipid phosphatase 3 (311 aa).

The Cytoplasmic segment spans residues 1 to 33; the sequence is MQNYKYDKAIVPESKNGGSPALNNNPRRSGSKR. Position 19 is a phosphoserine (serine 19). Residues 34 to 54 traverse the membrane as a helical segment; that stretch reads VLLICLDLFCLFMAGLPFLII. The Extracellular portion of the chain corresponds to 55 to 85; that stretch reads ETSTIKPYHRGFYCNDESIKYPLKTGETIND. The helical transmembrane segment at 86–106 threads the bilayer; the sequence is AVLCAVGIVIAILAIITGEFY. Over 107–122 the chain is Cytoplasmic; sequence RIYYLKKSRSTIQNPY. A Dityrosine basolateral targeting motif motif is present at residues 109 to 110; it reads YY. Residues 123–143 form a helical membrane-spanning segment; it reads VAALYKQVGCFLFGCAISQSF. Over 144–193 the chain is Extracellular; it reads TDIAKVSIGRLRPHFLSVCNPDFSQINCSEGYIQNYRCRGDDSKVQEARK. The phosphatase sequence motif I stretch occupies residues 148-156; that stretch reads KVSIGRLRP. Residue asparagine 170 is glycosylated (N-linked (GlcNAc...) asparagine). The Integrin-binding motif motif lies at 182–184; the sequence is RGD. Residues 194 to 214 traverse the membrane as a helical segment; sequence SFFSGHASFSMYTMLYLVLYL. The segment at 196-199 is phosphatase sequence motif II; the sequence is FSGH. Residue histidine 199 is the Proton donors of the active site. The Cytoplasmic portion of the chain corresponds to 215-225; that stretch reads QARFTWRGARL. The chain crosses the membrane as a helical span at residues 226–243; that stretch reads LRPLLQFTLIMMAFYTGL. Positions 244-255 are phosphatase sequence motif III; sequence SRVSDHKHHPSD. Residues 244 to 257 are Extracellular-facing; it reads SRVSDHKHHPSDVL. Histidine 251 serves as the catalytic Nucleophile. Residues 258 to 278 form a helical membrane-spanning segment; the sequence is AGFAQGALVACCIVFFVSDLF. A mediates interaction with CTNND1 region spans residues 275–311; the sequence is SDLFKTKTTLSLPAPAIRKEILSPVDIIDRNNHHNMM. Residues 279–311 are Cytoplasmic-facing; the sequence is KTKTTLSLPAPAIRKEILSPVDIIDRNNHHNMM.

This sequence belongs to the PA-phosphatase related phosphoesterase family. Forms functional homodimers and homooligomers that are not required for substrate recognition and catalytic activity. Can also form heterooligomers with other PLPP2 and PLPP3. Interacts with CTNND1; negatively regulates the PLPP3-mediated stabilization of beta-catenin/CTNNB1. N-glycosylated. Contains high-mannose oligosaccharides. As to expression, ubiquitously expressed. Highly expressed in heart and placenta.

The protein localises to the cell membrane. Its subcellular location is the basolateral cell membrane. It is found in the endoplasmic reticulum membrane. The protein resides in the endoplasmic reticulum-Golgi intermediate compartment membrane. It localises to the golgi apparatus membrane. The protein localises to the golgi apparatus. Its subcellular location is the trans-Golgi network membrane. It is found in the membrane raft. It carries out the reaction a 1,2-diacyl-sn-glycero-3-phosphate + H2O = a 1,2-diacyl-sn-glycerol + phosphate. It catalyses the reaction 1,2-dihexadecanoyl-sn-glycero-3-phosphate + H2O = 1,2-dihexadecanoyl-sn-glycerol + phosphate. The enzyme catalyses 1,2-di-(9Z-octadecenoyl)-sn-glycero-3-phosphate + H2O = 1,2-di-(9Z-octadecenoyl)-sn-glycerol + phosphate. The catalysed reaction is a monoacyl-sn-glycero-3-phosphate + H2O = a monoacylglycerol + phosphate. It carries out the reaction (9Z)-octadecenoyl-sn-glycero-3-phosphate + H2O = (9Z-octadecenoyl)-glycerol + phosphate. It catalyses the reaction sphing-4-enine 1-phosphate + H2O = sphing-4-enine + phosphate. The enzyme catalyses an N-acylsphing-4-enine 1-phosphate + H2O = an N-acylsphing-4-enine + phosphate. The catalysed reaction is N-(octanoyl)-sphing-4-enine-1-phosphate + H2O = N-octanoylsphing-4-enine + phosphate. It carries out the reaction N-(9Z-octadecenoyl)-ethanolamine phosphate + H2O = N-(9Z-octadecenoyl) ethanolamine + phosphate. The protein operates within lipid metabolism; phospholipid metabolism. Its activity is regulated as follows. Magnesium-independent phospholipid phosphatase. Insensitive to N-ethylmaleimide. Inhibited by sphingosine, zinc ions and modestly by propanolol. In terms of biological role, magnesium-independent phospholipid phosphatase of the plasma membrane that catalyzes the dephosphorylation of a variety of glycerolipid and sphingolipid phosphate esters including phosphatidate/PA, lysophosphatidate/LPA, diacylglycerol pyrophosphate/DGPP, sphingosine 1-phosphate/S1P and ceramide 1-phosphate/C1P. Also acts on N-oleoyl ethanolamine phosphate/N-(9Z-octadecenoyl)-ethanolamine phosphate, a potential physiological compound. Has both an extracellular and an intracellular phosphatase activity, allowing the hydrolysis and the cellular uptake of these bioactive lipid mediators from the milieu, regulating signal transduction in different cellular processes. Through the dephosphorylation of extracellular sphingosine-1-phosphate and the regulation of its extra- and intracellular availability, plays a role in vascular homeostasis, regulating endothelial cell migration, adhesion, survival, proliferation and the production of pro-inflammatory cytokines. By maintaining the appropriate levels of this lipid in the cerebellum, also ensure its proper development and function. Through its intracellular lipid phosphatase activity may act in early compartments of the secretory pathway, regulating the formation of Golgi to endoplasmic reticulum retrograde transport carriers. Functionally, independently of this phosphatase activity may also function in the Wnt signaling pathway and the stabilization of beta-catenin/CTNNB1, thereby regulating cell proliferation, migration and differentiation in angiogenesis or yet in tumor growth. Also plays a role in integrin-mediated cell-cell adhesion in angiogenesis. The protein is Phospholipid phosphatase 3 of Homo sapiens (Human).